The primary structure comprises 76 residues: Tautomerase PptA (76 aa).

The active-site Proton acceptor; via imino nitrogen is the Pro2.

The protein belongs to the 4-oxalocrotonate tautomerase family. PptA subfamily. As to quaternary structure, homodimer.

Its subcellular location is the cytoplasm. The protein is Tautomerase PptA of Pectobacterium atrosepticum (strain SCRI 1043 / ATCC BAA-672) (Erwinia carotovora subsp. atroseptica).